Consider the following 59-residue polypeptide: Large ribosomal subunit protein uL30 (59 aa).

This sequence belongs to the universal ribosomal protein uL30 family. In terms of assembly, part of the 50S ribosomal subunit.

The protein is Large ribosomal subunit protein uL30 of Yersinia pseudotuberculosis serotype I (strain IP32953).